The chain runs to 348 residues: 3-keto-steroid reductase (348 aa).

The NADP(+) site is built by Leu18, Val37, Thr41, Arg47, and Arg163. Residues Ser180 and Tyr203 each act as proton donor in the active site. The NADP(+) site is built by Tyr203, Lys207, and Ser238. The Lowers pKa of active site Tyr role is filled by Lys207.

It belongs to the short-chain dehydrogenases/reductases (SDR) family. ERG27 subfamily.

The enzyme catalyses a 3beta-hydroxysteroid + NADP(+) = a 3-oxosteroid + NADPH + H(+). It functions in the pathway steroid biosynthesis; zymosterol biosynthesis; zymosterol from lanosterol: step 5/6. In terms of biological role, responsible for the reduction of the keto group on the C-3 of sterols. The protein is 3-keto-steroid reductase (ERG27) of Eremothecium gossypii (strain ATCC 10895 / CBS 109.51 / FGSC 9923 / NRRL Y-1056) (Yeast).